A 741-amino-acid polypeptide reads, in one-letter code: Cytosolic phospholipase A2 (741 aa).

One can recognise a C2 domain in the interval 1-116 (MSNIIVEHQY…KVAQMEHVTL (116 aa)). The segment at 1 to 172 (MSNIIVEHQY…IKKLLKMENP (172 aa)) is phospholipid binding. Residues Asp34, Thr35, Asp37, Asn59, Asp87, Ala88, and Asn89 each contribute to the Ca(2+) site. The 598-residue stretch at 132-729 (VCASTDLRFS…SLSEIENKKF (598 aa)) folds into the PLA2c domain. Residue Ser223 is the Nucleophile of the active site. A disordered region spans residues 406–453 (TSSSTMEEELEQIKPEHIVGDDSADNEEETQRGGTESADAEDERQRHA). The span at 416 to 425 (EQIKPEHIVG) shows a compositional bias: basic and acidic residues. Residue Ser498 is modified to Phosphoserine; by MAPK. The active-site Proton acceptor is Asp540.

In terms of processing, activated by phosphorylation on a serine residue.

Its subcellular location is the cytoplasm. It is found in the cytoplasmic vesicle. It carries out the reaction a 1,2-diacyl-sn-glycero-3-phosphocholine + H2O = a 1-acyl-sn-glycero-3-phosphocholine + a fatty acid + H(+). It catalyses the reaction a 1-acyl-sn-glycero-3-phosphocholine + H2O = sn-glycerol 3-phosphocholine + a fatty acid + H(+). Stimulated by agonists such as ATP, EGF, thrombin and bradykinin as well as by cytosolic Ca(2+). Selectively hydrolyzes arachidonyl phospholipids in the sn-2 position releasing arachidonic acid. Together with its lysophospholipid activity, it is implicated in the initiation of the inflammatory response. This chain is Cytosolic phospholipase A2 (pla2g4a), found in Danio rerio (Zebrafish).